Here is a 47-residue protein sequence, read N- to C-terminus: uncharacterized protein (47 aa).

This is an uncharacterized protein from Bacillus subtilis (strain 168).